The following is a 264-amino-acid chain: MDNRPIGFLDSGVGGLTVVRELMRQLPHEEVIYIGDSARAPYGPRPAKQIKTYTWELVNFLLTKKVKMIVFACNTATAVVWEEVKEKLDIPVLGVILPGSSAAIKSTISGQIGIIGTPMTIKSNIYEQKIRDLSPQMKVRSLACPKFVPIVESNKMNSSVAKKIVYESLSPLVGKIDTLVLGCTHYPLLRPIIQNVMGPDVELIDSGAECVRDISVLLNYFDLNRSRTSKVLHHRFYTTASVASFKEIASDWLPLAIEVEHVTL.

Substrate is bound by residues 10–11 (DS) and 42–43 (YG). The active-site Proton donor/acceptor is cysteine 73. 74–75 (NT) contributes to the substrate binding site. Cysteine 183 serves as the catalytic Proton donor/acceptor. Substrate is bound at residue 184 to 185 (TH).

It belongs to the aspartate/glutamate racemases family.

The enzyme catalyses L-glutamate = D-glutamate. The protein operates within cell wall biogenesis; peptidoglycan biosynthesis. In terms of biological role, provides the (R)-glutamate required for cell wall biosynthesis. The chain is Glutamate racemase from Streptococcus mutans serotype c (strain ATCC 700610 / UA159).